A 178-amino-acid chain; its full sequence is Protein SPEAR1 (178 aa).

2 disordered regions span residues 1–48 (MGST…QRGL) and 139–178 (HFLNEDPSSTTRRSKSLGSGIQHSGSSENQEVDLELRLSL). A compositionally biased stretch (low complexity) spans 14–28 (SSPPSSSPTSSSSSP). An SPL motif is present at residues 46–54 (RGLGVAQLE). Over residues 144 to 167 (DPSSTTRRSKSLGSGIQHSGSSEN) the composition is skewed to polar residues. Residues 170-176 (VDLELRL) carry the EAR motif.

In terms of assembly, interacts with SPL and SPEAR2. In terms of tissue distribution, not detected in leaves.

Adapter-like transcriptional repressor recruiting TPL/TPR corepressors to inhibit TCP transcription factors. The polypeptide is Protein SPEAR1 (Arabidopsis thaliana (Mouse-ear cress)).